A 193-amino-acid chain; its full sequence is Der GTPase-activating protein YihI (193 aa).

Basic residues predominate over residues 1–12 (MSAKQPNRKPTG). Disordered stretches follow at residues 1 to 91 (MSAK…KLVM) and 143 to 193 (IIDN…PKKK). The span at 13-26 (KRKESDASALDGRE) shows a compositional bias: basic and acidic residues. Residues 27-36 (RKRAAKRKGL) show a composition bias toward basic residues. Residues 40–54 (SRQQAEQSSKNNNGK) are compositionally biased toward polar residues. A compositionally biased stretch (acidic residues) spans 145-160 (DNDDDEEDDGSFDDAS). Over residues 184–193 (PEPKPEPKKK) the composition is skewed to basic and acidic residues.

It belongs to the YihI family. In terms of assembly, interacts with Der.

Its function is as follows. A GTPase-activating protein (GAP) that modifies Der/EngA GTPase function. May play a role in ribosome biogenesis. In Aeromonas salmonicida (strain A449), this protein is Der GTPase-activating protein YihI.